Here is a 612-residue protein sequence, read N- to C-terminus: Apoptosis-inducing factor 1, mitochondrial (612 aa).

2 consecutive short sequence motifs (mitochondrial localization signal) follow at residues 1-30 and 62-88; these read MFRC…PKQR and KMDN…KTIK. The transit peptide at 1–54 directs the protein to the mitochondrion; the sequence is MFRCGGLAGAFKQKLVPLVRTVYVQRPKQRNRLPGNLFQQWRVPLELQMARQMA. Positions 55-101 are cleaved as a propeptide — removed in mature form; the sequence is SSGSSGGKMDNSVLVLIVGLSTIGAGAYAYKTIKEDQKRYNERVMGL. Lys-108 bears the N6-succinyllysine mark. Ser-115 carries the post-translational modification Phosphoserine. The segment at 133 to 482 is FAD-dependent oxidoreductase; the sequence is FLLIGGGTAA…KPYWHQSMFW (350 aa). FAD-binding positions include 137–141, 163–164, Arg-171, and Lys-176; these read GGGTA and ED. Trp-195 contributes to the NAD(+) binding site. Position 232 (Val-232) interacts with FAD. Lys-254 participates in a covalent cross-link: Glycyl lysine isopeptide (Lys-Gly) (interchain with G-Cter in ubiquitin). Ser-267 is modified (phosphoserine). FAD is bound at residue Arg-284. NAD(+) contacts are provided by residues 307–310, Glu-335, and Lys-341; that span reads GGFL. The residue at position 370 (Ser-370) is a Phosphoserine. Lys-387 bears the N6-acetyllysine mark. Gly-398 serves as a coordination point for NAD(+). Position 437 (Asp-437) interacts with FAD. A Nuclear localization signal motif is present at residues 445–450; it reads KLGRRR. NAD(+) is bound by residues 452–453, Trp-482, and Glu-492; that span reads EH. Residues 453–454 and Trp-482 each bind FAD; that span reads HH. A compositionally biased stretch (polar residues) spans 512 to 528; that stretch reads AQDNPKSATEQSGTGIR. Residues 512–551 form a disordered region; sequence AQDNPKSATEQSGTGIRSESETESEASEITIPPSAPAVPQ. Phosphothreonine is present on Thr-520. Ser-523 and Ser-529 each carry phosphoserine. Residue Asn-582 participates in NAD(+) binding. Lys-592 is subject to N6-acetyllysine.

The protein belongs to the FAD-dependent oxidoreductase family. As to quaternary structure, monomer (oxidized form). Homodimer (reduced form). Upon reduction with NADH, undergoes dimerization and forms tight, long-lived FADH2-NAD charge transfer complexes (CTC) resistant to oxidation. Also dimerizes with isoform 3 preventing its release from mitochondria. Interacts with XIAP/BIRC4. Interacts (via N-terminus) with EIF3G (via C-terminus). Interacts with PRELID1. Interacts with CHCHD4; the interaction increases in presence of NADH. Interacts with processed form of PARP1 (Poly [ADP-ribose] polymerase 1, processed C-terminus); interaction is mediated with poly-ADP-ribose chains attached to PARP1, promoting translocation into the nucleus. FAD is required as a cofactor. Under normal conditions, a 54-residue N-terminal segment is first proteolytically removed during or just after translocation into the mitochondrial intermembrane space (IMS) by the mitochondrial processing peptidase (MPP) to form the inner-membrane-anchored mature form (AIFmit). During apoptosis, it is further proteolytically processed at amino-acid position 101 leading to the generation of the mature form, which is confined to the mitochondrial IMS in a soluble form (AIFsol). AIFsol is released to the cytoplasm in response to specific death signals, and translocated to the nucleus, where it induces nuclear apoptosis in a caspase-independent manner. Post-translationally, ubiquitination by XIAP/BIRC4 does not lead to proteasomal degradation. Ubiquitination at Lys-254 by XIAP/BIRC4 blocks its ability to bind DNA and induce chromatin degradation, thereby inhibiting its ability to induce cell death. In terms of tissue distribution, expressed in cortical neurons (at protein level). Expressed in liver (at protein level).

It localises to the mitochondrion intermembrane space. The protein localises to the mitochondrion inner membrane. It is found in the cytoplasm. The protein resides in the nucleus. Its subcellular location is the perinuclear region. It localises to the mitochondrion. The protein localises to the cytosol. It catalyses the reaction A + NADH + H(+) = AH2 + NAD(+). Its function is as follows. Functions both as NADH oxidoreductase and as regulator of apoptosis. In response to apoptotic stimuli, it is released from the mitochondrion intermembrane space into the cytosol and to the nucleus, where it functions as a proapoptotic factor in a caspase-independent pathway. Release into the cytoplasm is mediated upon binding to poly-ADP-ribose chains. The soluble form (AIFsol) found in the nucleus induces 'parthanatos' i.e. caspase-independent fragmentation of chromosomal DNA. Binds to DNA in a sequence-independent manner. Interacts with EIF3G, and thereby inhibits the EIF3 machinery and protein synthesis, and activates caspase-7 to amplify apoptosis. Plays a critical role in caspase-independent, pyknotic cell death in hydrogen peroxide-exposed cells. In contrast, participates in normal mitochondrial metabolism. Plays an important role in the regulation of respiratory chain biogenesis by interacting with CHCHD4 and controlling CHCHD4 mitochondrial import. The sequence is that of Apoptosis-inducing factor 1, mitochondrial from Mus musculus (Mouse).